The sequence spans 202 residues: FMN-dependent NADH:quinone oxidoreductase 2 (202 aa).

FMN is bound by residues Ser9, 15 to 17 (SAS), and 95 to 98 (MWNL).

It belongs to the azoreductase type 1 family. Homodimer. FMN is required as a cofactor.

The enzyme catalyses 2 a quinone + NADH + H(+) = 2 a 1,4-benzosemiquinone + NAD(+). It carries out the reaction N,N-dimethyl-1,4-phenylenediamine + anthranilate + 2 NAD(+) = 2-(4-dimethylaminophenyl)diazenylbenzoate + 2 NADH + 2 H(+). Functionally, quinone reductase that provides resistance to thiol-specific stress caused by electrophilic quinones. Also exhibits azoreductase activity. Catalyzes the reductive cleavage of the azo bond in aromatic azo compounds to the corresponding amines. The protein is FMN-dependent NADH:quinone oxidoreductase 2 of Hahella chejuensis (strain KCTC 2396).